Reading from the N-terminus, the 229-residue chain is MANELTWHDVLAEEKQQPYFLNTLQTVASERQSGVTIYPPQKDVFNAFRFTALGDVKVVILGQDPYHGPGQAHGLAFSVRPGIATPPSLLNMYKELENTIPGFTRPNHGYLESWARQGVLLLNTVLTVRAGQAHSHASLGWETFTDKVISLINQHREGVVFLLWGSHAQKKGAIIDKQRHHILKAPHPSPLSAHRGFFGCNHFVLANQWLEQRGEKPIDWMPVLPAESE.

Residue aspartate 64 is the Proton acceptor of the active site.

The protein belongs to the uracil-DNA glycosylase (UDG) superfamily. UNG family.

It localises to the cytoplasm. It carries out the reaction Hydrolyzes single-stranded DNA or mismatched double-stranded DNA and polynucleotides, releasing free uracil.. Functionally, excises uracil residues from the DNA which can arise as a result of misincorporation of dUMP residues by DNA polymerase or due to deamination of cytosine. The chain is Uracil-DNA glycosylase from Escherichia coli O81 (strain ED1a).